We begin with the raw amino-acid sequence, 301 residues long: Ribonuclease Z (301 aa).

7 residues coordinate Zn(2+): histidine 61, histidine 63, aspartate 65, histidine 66, histidine 140, aspartate 211, and histidine 269. The active-site Proton acceptor is the aspartate 65.

Belongs to the RNase Z family. Homodimer. Zn(2+) is required as a cofactor.

The catalysed reaction is Endonucleolytic cleavage of RNA, removing extra 3' nucleotides from tRNA precursor, generating 3' termini of tRNAs. A 3'-hydroxy group is left at the tRNA terminus and a 5'-phosphoryl group is left at the trailer molecule.. In terms of biological role, zinc phosphodiesterase, which displays some tRNA 3'-processing endonuclease activity. Probably involved in tRNA maturation, by removing a 3'-trailer from precursor tRNA. In Bradyrhizobium diazoefficiens (strain JCM 10833 / BCRC 13528 / IAM 13628 / NBRC 14792 / USDA 110), this protein is Ribonuclease Z.